The sequence spans 507 residues: DNA replication licensing factor MCM6 (507 aa).

In terms of domain architecture, MCM spans 32 to 239 (LYHNLCTSLF…TDYAIARRIV (208 aa)). Residues His-45, Ser-85, Thr-86, Ala-87, Lys-88, Ser-89, and Asn-190 each contribute to the ATP site. The Arginine finger motif lies at 214–217 (SRFD). Residues Arg-305 and Glu-308 each coordinate ADP. Position 329 is an N6-acetyllysine (Lys-329). The tract at residues 365–392 (GPGGINGHADSPAPVNGFNGSGEDASQE) is disordered. 3 positions are modified to phosphoserine: Ser-375, Ser-390, and Ser-448. A Phosphothreonine modification is found at Thr-477.

The protein belongs to the MCM family. As to quaternary structure, component of the MCM2-7 complex. The complex forms a toroidal hexameric ring with the proposed subunit order MCM2-MCM6-MCM4-MCM7-MCM3-MCM5. Component of the CMG helicase complex, a hexameric ring of related MCM2-7 subunits stabilized by CDC45 and the tetrameric GINS complex. May interact with MCM10. Interacts with TIPIN. Interacts with CDT1. Interacts with MCMBP. Interacts with DDI2. O-glycosylated (O-GlcNAcylated), in a cell cycle-dependent manner.

The protein resides in the nucleus. It localises to the chromosome. It carries out the reaction ATP + H2O = ADP + phosphate + H(+). In terms of biological role, acts as a component of the MCM2-7 complex (MCM complex) which is the replicative helicase essential for 'once per cell cycle' DNA replication initiation and elongation in eukaryotic cells. Core component of CDC45-MCM-GINS (CMG) helicase, the molecular machine that unwinds template DNA during replication, and around which the replisome is built. The active ATPase sites in the MCM2-7 ring are formed through the interaction surfaces of two neighboring subunits such that a critical structure of a conserved arginine finger motif is provided in trans relative to the ATP-binding site of the Walker A box of the adjacent subunit. The six ATPase active sites, however, are likely to contribute differentially to the complex helicase activity. In Rattus norvegicus (Rat), this protein is DNA replication licensing factor MCM6 (Mcm6).